Reading from the N-terminus, the 263-residue chain is MNEGDVLVVGGTSDARALCRQLDAANVAYTLSVATPAGKALAGDIKGQVRCGRLEYGQMVAWLKENRTRWVIDASHPYAEMVSHNLLRACETAGVLLSRYQRPEQLSNLTHPLLYTARSIADACEIARRFGPRVLLTTGSKDLAVWRAGLAEKTLLARVLPVAEVIQRCSELGFGVGEIFALCGPFSADFNAAFYHQCRADVVITKASGAEGGYQEKVQPCLDAGIPCIVIARPTPLVTGDELLESQAAFAQRLSRWLAAAKE.

This sequence belongs to the precorrin-6x reductase family.

It catalyses the reaction Co-precorrin-6B + NAD(+) = Co-precorrin-6A + NADH + H(+). Its pathway is cofactor biosynthesis; adenosylcobalamin biosynthesis; cob(II)yrinate a,c-diamide from sirohydrochlorin (anaerobic route): step 7/10. Catalyzes the reduction of the macrocycle of cobalt-precorrin-6A to cobalt-precorrin-6B. The protein is Cobalt-precorrin-6A reductase (cbiJ) of Salmonella typhimurium (strain LT2 / SGSC1412 / ATCC 700720).